The primary structure comprises 184 residues: GTP cyclohydrolase 1 (184 aa).

Zn(2+)-binding residues include cysteine 75, histidine 78, and cysteine 146.

It belongs to the GTP cyclohydrolase I family. Homomer.

It carries out the reaction GTP + H2O = 7,8-dihydroneopterin 3'-triphosphate + formate + H(+). Its pathway is cofactor biosynthesis; 7,8-dihydroneopterin triphosphate biosynthesis; 7,8-dihydroneopterin triphosphate from GTP: step 1/1. The chain is GTP cyclohydrolase 1 from Streptococcus pneumoniae (strain Hungary19A-6).